We begin with the raw amino-acid sequence, 526 residues long: MAEVNPAEVSAILKQQLSGFESKASLDEVGTVLTVGDGIANVYGLANAQYGELVQFESGLEGIVLNLEEDNVGVVLLGPANEIKESSTVKRTQRIASINVGEGIVGRVVDTLGAPIDGKGAIEGETFEMPLERKAPGVIYRQPVTEPLQTGIKSIDAMVPVGRGQRELVIGDRQTGKTTVCIDTILNQKEFYDAGEPVYCIYVAIGQKASTVAAIAKTLEDKGALAYTTIVAANASDPAPMQVYAPFAGAAIGEYFRDTGRPALIVFDDLSKQAVAYREVSLLLRRPPGREAYPGDVFFLHSRLLERSAKVIDDDGIAKQMNDLPESLKDKVKGGGSLTALPIIETQAGDVSAYIPTNVISITDGQIFLTSDLFNSGVRPAIDVGISVSRVGGNAQIKSMKKVAGTLKLDQAQYRELEAFAKFGSDLDPTTMSVISKGKRNVEILKQGQNDPYPVENQIAIIYAGSKNLLRDVPVEKVKEFERDYLAYLDTKHRDTLDTLKAGKLTDEVIDTLTQTAKELSAKYKN.

Gly171–Thr178 provides a ligand contact to ATP.

It belongs to the ATPase alpha/beta chains family. F-type ATPases have 2 components, CF(1) - the catalytic core - and CF(0) - the membrane proton channel. CF(1) has five subunits: alpha(3), beta(3), gamma(1), delta(1), epsilon(1). CF(0) has three main subunits: a(1), b(2) and c(9-12). The alpha and beta chains form an alternating ring which encloses part of the gamma chain. CF(1) is attached to CF(0) by a central stalk formed by the gamma and epsilon chains, while a peripheral stalk is formed by the delta and b chains.

It is found in the cell membrane. It carries out the reaction ATP + H2O + 4 H(+)(in) = ADP + phosphate + 5 H(+)(out). Produces ATP from ADP in the presence of a proton gradient across the membrane. The alpha chain is a regulatory subunit. In Christiangramia forsetii (strain DSM 17595 / CGMCC 1.15422 / KT0803) (Gramella forsetii), this protein is ATP synthase subunit alpha.